A 144-amino-acid chain; its full sequence is Large ribosomal subunit protein uL22 (144 aa).

Positions Glu-123 to Gln-144 are disordered. Basic residues predominate over residues Val-125–Gln-144.

Belongs to the universal ribosomal protein uL22 family. As to quaternary structure, part of the 50S ribosomal subunit.

Its function is as follows. This protein binds specifically to 23S rRNA; its binding is stimulated by other ribosomal proteins, e.g. L4, L17, and L20. It is important during the early stages of 50S assembly. It makes multiple contacts with different domains of the 23S rRNA in the assembled 50S subunit and ribosome. Functionally, the globular domain of the protein is located near the polypeptide exit tunnel on the outside of the subunit, while an extended beta-hairpin is found that lines the wall of the exit tunnel in the center of the 70S ribosome. This is Large ribosomal subunit protein uL22 from Mycoplasma genitalium (strain ATCC 33530 / DSM 19775 / NCTC 10195 / G37) (Mycoplasmoides genitalium).